Reading from the N-terminus, the 203-residue chain is Cilia- and flagella-associated protein 20 (203 aa).

It belongs to the CFAP20 family.

It is found in the nucleus. The protein resides in the cytoplasm. It localises to the cytoskeleton. Its subcellular location is the microtubule organizing center. The protein localises to the centrosome. It is found in the centriole. The protein resides in the cilium basal body. It localises to the cilium axoneme. Cilium- and flagellum-specific protein that plays a role in axonemal structure organization and motility. Microtubule inner protein (MIP) part of the dynein-decorated doublet microtubules (DMTs) in cilia axoneme, which is required for motile cilia beating. Involved in the regulation of the size and morphology of cilia. Required for axonemal microtubules polyglutamylation. This is Cilia- and flagella-associated protein 20 from Caenorhabditis elegans.